Consider the following 196-residue polypeptide: MVGGLKRKHSDLEEEEERWEWSPAGLQSYQQALLRISLDKVQRSLGPRAPSLRRHVLIHNTLQQLQAALRLAPAPALPPEPLFLGEEDFSLSATIGSILRELDTSMDGTEPPQNPVTPLGLQNEVPPQPDPVFLEALSSRYLGDSGLDDFFLDIDTSAVEKEPARAPPEPPHNLFCAPGSWEWNELDHIMEIILGS.

A disordered region spans residues 1 to 21; sequence MVGGLKRKHSDLEEEEERWEW. Residues 26–73 enclose the SERTA domain; the sequence is LQSYQQALLRISLDKVQRSLGPRAPSLRRHVLIHNTLQQLQAALRLAP. Residues 104 to 125 are disordered; sequence TSMDGTEPPQNPVTPLGLQNEV.

Interacts with RPA2. In terms of assembly, (Microbial infection) Interacts with influenza virus PA, PB1 and PB2,leading to inhibition of RdRp complex assembly. As to quaternary structure, (Microbial infection) Interacts with zika virus capsid protein.

Its subcellular location is the nucleus. Its function is as follows. Antiviral interferon-stimulated protein that plays a role in innate immunity and in the suppression of viruses through different mechanisms. Plays a role in the late phase response of TLR-induced immune effector expression. During influenza infection, interacts with PB2, PB1, and PA to disrupt the formation of the viral RdRp complex. Inhibits zika virus by interacting with the capsid protein in the nucleolus and reducing its abundance through proteasomal degradation. Strong transcriptional coactivator. The sequence is that of SERTA domain-containing protein 3 (SERTAD3) from Homo sapiens (Human).